The chain runs to 100 residues: MKTLSEIKEILRKHKKILKDKYKVKSIALFGSYARGEQTEESDIDIMVEFDENNYPSFSEYLELIEYLEKILGLKVDLITKKSIHNPYVKKSIEEDLIYV.

A GSX(10)DXD motif motif is present at residues 31–45; it reads GSYARGEQTEESDID. Asp43, Asp45, and Asp77 together coordinate Mg(2+).

This sequence belongs to the MntA antitoxin family. As to quaternary structure, probably forms a complex with cognate toxin MJ1380. Requires Mg(2+) as cofactor.

The catalysed reaction is L-tyrosyl-[protein] + ATP = O-(5'-adenylyl)-L-tyrosyl-[protein] + diphosphate. It carries out the reaction O-(5'-adenylyl)-L-tyrosyl-[protein] + ATP = O-[5'-(adenylyl-(5'-&gt;3')-adenylyl)]-L-tyrosyl-[protein] + diphosphate. Its function is as follows. Probable antitoxin component of a putative type VII toxin-antitoxin (TA) system. Neutralizes cognate toxic MJ1380 by di-AMPylation. The sequence is that of Putative protein adenylyltransferase MJ1379 from Methanocaldococcus jannaschii (strain ATCC 43067 / DSM 2661 / JAL-1 / JCM 10045 / NBRC 100440) (Methanococcus jannaschii).